The following is a 357-amino-acid chain: Peptide chain release factor 1 (357 aa).

Glutamine 236 carries the N5-methylglutamine modification.

The protein belongs to the prokaryotic/mitochondrial release factor family. In terms of processing, methylated by PrmC. Methylation increases the termination efficiency of RF1.

The protein localises to the cytoplasm. Peptide chain release factor 1 directs the termination of translation in response to the peptide chain termination codons UAG and UAA. The polypeptide is Peptide chain release factor 1 (prfA) (Mycobacterium bovis (strain ATCC BAA-935 / AF2122/97)).